Reading from the N-terminus, the 321-residue chain is Mas-related G-protein coupled receptor member H (321 aa).

At 1–35 (MEPLAMTLYPLESTQPTRNKTPNETTWSSEHTDDH) the chain is on the extracellular side. The N-linked (GlcNAc...) asparagine glycan is linked to N23. A helical membrane pass occupies residues 36-56 (TYFLVSLVICSLGLAGNGLLI). At 57–71 (WFLIFCIKRKPFTIY) the chain is on the cytoplasmic side. The helical transmembrane segment at 72–92 (ILHLAIADFMVLLCSSIMKLV) threads the bilayer. The Extracellular segment spans residues 93–102 (NTFHIYNMTL). N-linked (GlcNAc...) asparagine glycosylation occurs at N99. Residues 103-126 (ESYAILFMIFGYNTGLHLLTAISV) form a helical membrane-spanning segment. The Cytoplasmic segment spans residues 127 to 147 (ERCLSVLYPIWYQCQRPKHQS). The chain crosses the membrane as a helical span at residues 148–168 (AVACMLLWALSVLVSGLENFF). Over 169 to 188 (CILEVKPQFPECRYVYIFSC) the chain is Extracellular. The helical transmembrane segment at 189–209 (ILTFLVFVPLMIFSNLILFIQ) threads the bilayer. Residues 210–225 (VCCNLKPRQPTKLYVI) lie on the Cytoplasmic side of the membrane. Residues 226 to 246 (IMTTVILFLVFAMPMKVLLII) form a helical membrane-spanning segment. Residue G247 is a topological domain, extracellular. A helical membrane pass occupies residues 248–271 (YYSSSLDDSVWDSLPYLNMLSTIN). Over 272–320 (CSINPIVYFVVGSLRRKRSRKSLKEALQKVFEEKPVVASRENVTQFSLP) the chain is Cytoplasmic.

The protein belongs to the G-protein coupled receptor 1 family. Mas subfamily.

Its subcellular location is the cell membrane. Its function is as follows. Orphan receptor. May regulate nociceptor function and/or development, including the sensation or modulation of pain. The polypeptide is Mas-related G-protein coupled receptor member H (Mrgprh) (Mus musculus (Mouse)).